The chain runs to 119 residues: Protein TusC (119 aa).

The protein belongs to the DsrF/TusC family. As to quaternary structure, heterohexamer, formed by a dimer of trimers. The hexameric TusBCD complex contains 2 copies each of TusB, TusC and TusD. The TusBCD complex interacts with TusE.

The protein localises to the cytoplasm. Part of a sulfur-relay system required for 2-thiolation of 5-methylaminomethyl-2-thiouridine (mnm(5)s(2)U) at tRNA wobble positions. The polypeptide is Protein TusC (Sodalis glossinidius (strain morsitans)).